The sequence spans 139 residues: Plasmid stability protein StbB (139 aa).

The PINc domain occupies 2–136 (ILLDTNVISE…EAAGLNVINP (135 aa)). 2 residues coordinate Mg(2+): Asp-5 and Asp-104.

It belongs to the PINc/VapC protein family. Mg(2+) serves as cofactor.

In terms of biological role, toxic component of a type II toxin-antitoxin (TA) system. An RNase. Involved in plasmid stability. This chain is Plasmid stability protein StbB (stbB), found in Pseudomonas syringae pv. tomato (strain ATCC BAA-871 / DC3000).